The primary structure comprises 340 residues: Methionine import ATP-binding protein MetN 2 (340 aa).

Residues 5–244 (VRFESVTKTF…PQAPASKSFV (240 aa)) enclose the ABC transporter domain. 41 to 48 (GYSGAGKS) lines the ATP pocket.

This sequence belongs to the ABC transporter superfamily. Methionine importer (TC 3.A.1.24) family. The complex is composed of two ATP-binding proteins (MetN), two transmembrane proteins (MetI) and a solute-binding protein (MetQ).

It localises to the cell membrane. The enzyme catalyses L-methionine(out) + ATP + H2O = L-methionine(in) + ADP + phosphate + H(+). It catalyses the reaction D-methionine(out) + ATP + H2O = D-methionine(in) + ADP + phosphate + H(+). Its function is as follows. Part of the ABC transporter complex MetNIQ involved in methionine import. Responsible for energy coupling to the transport system. The chain is Methionine import ATP-binding protein MetN 2 from Rhodococcus jostii (strain RHA1).